The chain runs to 365 residues: Succinyl-diaminopimelate desuccinylase (365 aa).

His65 provides a ligand contact to Zn(2+). Asp67 is a catalytic residue. Asp96 lines the Zn(2+) pocket. Glu126 functions as the Proton acceptor in the catalytic mechanism. Zn(2+) is bound by residues Glu127, Glu155, and His340.

The protein belongs to the peptidase M20A family. DapE subfamily. Homodimer. It depends on Zn(2+) as a cofactor. Co(2+) is required as a cofactor.

It carries out the reaction N-succinyl-(2S,6S)-2,6-diaminopimelate + H2O = (2S,6S)-2,6-diaminopimelate + succinate. It functions in the pathway amino-acid biosynthesis; L-lysine biosynthesis via DAP pathway; LL-2,6-diaminopimelate from (S)-tetrahydrodipicolinate (succinylase route): step 3/3. In terms of biological role, catalyzes the hydrolysis of N-succinyl-L,L-diaminopimelic acid (SDAP), forming succinate and LL-2,6-diaminopimelate (DAP), an intermediate involved in the bacterial biosynthesis of lysine and meso-diaminopimelic acid, an essential component of bacterial cell walls. In Campylobacter jejuni subsp. jejuni serotype O:6 (strain 81116 / NCTC 11828), this protein is Succinyl-diaminopimelate desuccinylase.